A 235-amino-acid chain; its full sequence is Probable flavin-dependent thymidylate synthase (235 aa).

A ThyX domain is found at 1–229 (MKVQLIASTI…PNTYQDIPTE (229 aa)). FAD is bound by residues serine 70 and 93–95 (RHR). DUMP contacts are provided by residues 90-93 (ELER), 103-105 (SQR), and arginine 168. The ThyX motif signature appears at 93 to 103 (RHRHLSFSVVS). 184–186 (NHR) is a binding site for FAD. DUMP is bound at residue arginine 195. Arginine 195 serves as the catalytic Involved in ionization of N3 of dUMP, leading to its activation.

Belongs to the thymidylate synthase ThyX family. As to quaternary structure, homotetramer. It depends on FAD as a cofactor.

The enzyme catalyses dUMP + (6R)-5,10-methylene-5,6,7,8-tetrahydrofolate + NADPH + H(+) = dTMP + (6S)-5,6,7,8-tetrahydrofolate + NADP(+). Its pathway is pyrimidine metabolism; dTTP biosynthesis. In terms of biological role, catalyzes the reductive methylation of 2'-deoxyuridine-5'-monophosphate (dUMP) to 2'-deoxythymidine-5'-monophosphate (dTMP) while utilizing 5,10-methylenetetrahydrofolate (mTHF) as the methyl donor, and NADPH and FADH(2) as the reductant. This chain is Probable flavin-dependent thymidylate synthase (48), found in Mycobacterium (Mycobacteriophage D29).